The following is a 135-amino-acid chain: 2-iminobutanoate/2-iminopropanoate deaminase (135 aa).

Ser2 bears the N-acetylserine mark. Residues Lys13, Lys60, Lys67, and Lys134 each carry the N6-succinyllysine modification.

Belongs to the RutC family. Homotrimer. Interacts with YTHDF2. Expressed predominantly in liver and kidney. Lower levels in lung and brain.

It localises to the cytoplasm. The protein resides in the nucleus. The protein localises to the peroxisome. Its subcellular location is the mitochondrion. The enzyme catalyses 2-iminobutanoate + H2O = 2-oxobutanoate + NH4(+). It catalyses the reaction 2-iminopropanoate + H2O = pyruvate + NH4(+). Functionally, catalyzes the hydrolytic deamination of enamine/imine intermediates that form during the course of normal metabolism. May facilitate the release of ammonia from these potentially toxic reactive metabolites, reducing their impact on cellular components. It may act on enamine/imine intermediates formed by several types of pyridoxal-5'-phosphate-dependent dehydratases including L-threonine dehydratase. Its function is as follows. Also promotes endoribonucleolytic cleavage of some transcripts by promoting recruitment of the ribonuclease P/MRP complex. Acts by bridging YTHDF2 and the ribonuclease P/MRP complex. RIDA/HRSP12 binds to N6-methyladenosine (m6A)-containing mRNAs containing a 5'-GGUUC-3' motif: cooperative binding of RIDA/HRSP12 and YTHDF2 to such transcripts lead to recruitment of the ribonuclease P/MRP complex and subsequent endoribonucleolytic cleavage. This chain is 2-iminobutanoate/2-iminopropanoate deaminase, found in Mus musculus (Mouse).